Reading from the N-terminus, the 351-residue chain is Protein-glutamate methylesterase/protein-glutamine glutaminase 2 (351 aa).

Residues 4-121 (KVLVVDDSAL…PQDFNEYQDL (118 aa)) form the Response regulatory domain. Asp-55 carries the post-translational modification 4-aspartylphosphate. The 193-residue stretch at 156-348 (RVINTQLVAI…DKMLNYLASL (193 aa)) folds into the CheB-type methylesterase domain. Residues Ser-168, His-194, and Asp-290 contribute to the active site.

This sequence belongs to the CheB family. Post-translationally, phosphorylated by CheA. Phosphorylation of the N-terminal regulatory domain activates the methylesterase activity.

Its subcellular location is the cytoplasm. It catalyses the reaction [protein]-L-glutamate 5-O-methyl ester + H2O = L-glutamyl-[protein] + methanol + H(+). It carries out the reaction L-glutaminyl-[protein] + H2O = L-glutamyl-[protein] + NH4(+). Functionally, involved in chemotaxis. Part of a chemotaxis signal transduction system that modulates chemotaxis in response to various stimuli. Catalyzes the demethylation of specific methylglutamate residues introduced into the chemoreceptors (methyl-accepting chemotaxis proteins or MCP) by CheR. Also mediates the irreversible deamidation of specific glutamine residues to glutamic acid. The chain is Protein-glutamate methylesterase/protein-glutamine glutaminase 2 from Shewanella sp. (strain MR-7).